The chain runs to 457 residues: Transcription factor CP2-like protein 1 (457 aa).

The interval Met-1 to Cys-52 is mediate transcriptional repression. Residues Arg-43–Asn-280 form the Grh/CP2 DB domain. Disordered regions lie at residues Lys-219–Tyr-245 and Pro-271–Gly-301. The span at Lys-221–Tyr-245 shows a compositional bias: basic and acidic residues. The segment at Pro-261–Arg-365 is SAM2-like domain. Positions Pro-271–Ser-281 are enriched in polar residues.

Belongs to the grh/CP2 family. CP2 subfamily. Forms homohexamers via its SAM-like domain. Interacts with MTA1; which is indispensable for TFCP2L1-mediated self-renewal-promoting effect and endoderm-inhibiting action.

It localises to the nucleus. Transcription factor that facilitates establishment and maintenance of pluripotency in embryonic stem cells (ESCs). With KLF2, acts as the major effector of self-renewal that mediates induction of pluripotency downstream of LIF/STAT3 and Wnt/beta-catenin signaling. Required for normal duct development in the salivary gland and kidney. Coordinates the development of the kidney collecting ducts intercalated (IC) and principal (PC) cells, which regulate acid-base and salt-water homeostasis, respectively. Regulates the expression of IC genes including subunits B1 and D2 of the V-ATPase complex, OXGR1, CA12, SLC4A1, AQP6 and IC-specific transcription factor FOXI1. Also regulates the expression of JAG1 and subsequent notch signaling in the collecting duct. JAG1 initiates notch signaling in PCs but inhibits notch signaling in ICs. Acts as a transcriptional suppressor that may suppress UBP1-mediated transcriptional activation. Modulates the placental expression of CYP11A1. This is Transcription factor CP2-like protein 1 (TFCP2L1) from Pongo abelii (Sumatran orangutan).